A 478-amino-acid chain; its full sequence is Adenylosuccinate lyase (478 aa).

Substrate contacts are provided by residues 14–15, 81–83, and 107–108; these read RY, KHD, and TS. His-155 functions as the Proton donor/acceptor in the catalytic mechanism. Gln-237 contacts substrate. Ser-285 (proton donor/acceptor) is an active-site residue. Arg-299, Arg-325, Ser-330, and Arg-334 together coordinate substrate.

Belongs to the lyase 1 family. Adenylosuccinate lyase subfamily. In terms of assembly, homotetramer. Residues from neighboring subunits contribute catalytic and substrate-binding residues to each active site.

It carries out the reaction N(6)-(1,2-dicarboxyethyl)-AMP = fumarate + AMP. It catalyses the reaction (2S)-2-[5-amino-1-(5-phospho-beta-D-ribosyl)imidazole-4-carboxamido]succinate = 5-amino-1-(5-phospho-beta-D-ribosyl)imidazole-4-carboxamide + fumarate. The protein operates within purine metabolism; AMP biosynthesis via de novo pathway; AMP from IMP: step 2/2. It functions in the pathway purine metabolism; IMP biosynthesis via de novo pathway; 5-amino-1-(5-phospho-D-ribosyl)imidazole-4-carboxamide from 5-amino-1-(5-phospho-D-ribosyl)imidazole-4-carboxylate: step 2/2. Its function is as follows. Catalyzes two non-sequential steps in de novo AMP synthesis: converts (S)-2-(5-amino-1-(5-phospho-D-ribosyl)imidazole-4-carboxamido)succinate (SAICAR) to fumarate plus 5-amino-1-(5-phospho-D-ribosyl)imidazole-4-carboxamide, and thereby also contributes to de novo IMP synthesis, and converts succinyladenosine monophosphate (SAMP) to AMP and fumarate. This chain is Adenylosuccinate lyase, found in Caenorhabditis briggsae.